Consider the following 317-residue polypeptide: Fe-S cluster assembly protein DRE2 (317 aa).

The tract at residues 1-131 is N-terminal SAM-like domain; it reads MERMLFLSPP…KPNFGAQDTV (131 aa). Positions 132–209 are linker; the sequence is PLKLGKKKKA…EEALMDEEDM (78 aa). [2Fe-2S] cluster contacts are provided by C219, C230, C233, and C235. Residues 219 to 235 are fe-S binding site A; that stretch reads CRPKAGKRRRACKDCTC. Residues C280, C283, C291, and C294 each contribute to the [4Fe-4S] cluster site. 2 consecutive short sequence motifs (cx2C motif) follow at residues 280-283 and 291-294; these read CGNC and CDGC. Residues 280-294 form a fe-S binding site B region; the sequence is CGNCALGDAFRCDGC.

The protein belongs to the anamorsin family. Monomer. Interacts with TAH18. Interacts with MIA40. Requires [2Fe-2S] cluster as cofactor. The cofactor is [4Fe-4S] cluster.

The protein localises to the cytoplasm. It is found in the mitochondrion intermembrane space. In terms of biological role, component of the cytosolic iron-sulfur (Fe-S) protein assembly (CIA) machinery required for the maturation of extramitochondrial Fe-S proteins. Part of an electron transfer chain functioning in an early step of cytosolic Fe-S biogenesis, facilitating the de novo assembly of a [4Fe-4S] cluster on the scaffold complex CFD1-NBP35. Electrons are transferred to DRE2 from NADPH via the FAD- and FMN-containing protein TAH18. TAH18-DRE2 are also required for the assembly of the diferric tyrosyl radical cofactor of ribonucleotide reductase (RNR), probably by providing electrons for reduction during radical cofactor maturation in the catalytic small subunit RNR2. The chain is Fe-S cluster assembly protein DRE2 from Uncinocarpus reesii (strain UAMH 1704).